A 38-amino-acid chain; its full sequence is Large ribosomal subunit protein bL36 (38 aa).

This sequence belongs to the bacterial ribosomal protein bL36 family.

This is Large ribosomal subunit protein bL36 from Pseudoalteromonas atlantica (strain T6c / ATCC BAA-1087).